The sequence spans 690 residues: Cysteine-rich receptor-like protein kinase 21 (690 aa).

A signal peptide spans 1 to 24 (MQKNKMVDLRAIFWFVVISSCAVA). A Gnk2-homologous 1 domain is found at 25–129 (APTCIQRSDF…CLVRYSNHLI (105 aa)). Topologically, residues 25–281 (APTCIQRSDF…KDGKNISTGS (257 aa)) are extracellular. N-linked (GlcNAc...) asparagine glycans are attached at residues N130, N148, N155, N220, N268, and N276. One can recognise a Gnk2-homologous 2 domain in the interval 140–246 (AEYIEYKYNT…CFMRWDLQPF (107 aa)). The chain crosses the membrane as a helical span at residues 282–302 (IVAIAVVSVVVSTVLLALGYA). The Cytoplasmic portion of the chain corresponds to 303-690 (VSRRRKAYQS…DASITSVRPR (388 aa)). Positions 363–640 (FHKSNKLGHG…IFRMLTNVSI (278 aa)) constitute a Protein kinase domain. ATP contacts are provided by residues 369 to 377 (LGHGGFGAV) and K391. Y436 carries the post-translational modification Phosphotyrosine. The active-site Proton acceptor is the D488. S492 is subject to Phosphoserine. The residue at position 528 (T528) is a Phosphothreonine. Y536 is modified (phosphotyrosine).

The protein belongs to the protein kinase superfamily. Ser/Thr protein kinase family. CRK subfamily.

It is found in the membrane. It catalyses the reaction L-seryl-[protein] + ATP = O-phospho-L-seryl-[protein] + ADP + H(+). The enzyme catalyses L-threonyl-[protein] + ATP = O-phospho-L-threonyl-[protein] + ADP + H(+). The polypeptide is Cysteine-rich receptor-like protein kinase 21 (CRK21) (Arabidopsis thaliana (Mouse-ear cress)).